A 196-amino-acid chain; its full sequence is Pyridoxine/pyridoxamine 5'-phosphate oxidase (196 aa).

Position 49 (Lys49) interacts with substrate. The FMN site is built by Lys66 and Gln88. Substrate-binding residues include Tyr106, Arg110, and Ser114. FMN is bound by residues 123–124 and Trp168; that span reads QS. 174 to 176 provides a ligand contact to substrate; sequence RLH. Arg178 lines the FMN pocket.

It belongs to the pyridoxamine 5'-phosphate oxidase family. As to quaternary structure, homodimer. FMN is required as a cofactor.

It catalyses the reaction pyridoxamine 5'-phosphate + O2 + H2O = pyridoxal 5'-phosphate + H2O2 + NH4(+). The catalysed reaction is pyridoxine 5'-phosphate + O2 = pyridoxal 5'-phosphate + H2O2. It functions in the pathway cofactor metabolism; pyridoxal 5'-phosphate salvage; pyridoxal 5'-phosphate from pyridoxamine 5'-phosphate: step 1/1. The protein operates within cofactor metabolism; pyridoxal 5'-phosphate salvage; pyridoxal 5'-phosphate from pyridoxine 5'-phosphate: step 1/1. Catalyzes the oxidation of either pyridoxine 5'-phosphate (PNP) or pyridoxamine 5'-phosphate (PMP) into pyridoxal 5'-phosphate (PLP). The sequence is that of Pyridoxine/pyridoxamine 5'-phosphate oxidase from Bdellovibrio bacteriovorus (strain ATCC 15356 / DSM 50701 / NCIMB 9529 / HD100).